We begin with the raw amino-acid sequence, 202 residues long: MSRYRGPRVKIIRRLGALPGLTTKTLKSKSGYINQSTSNKKVSQYRIRLEEKQKLRFHYGLTERQLLKYVRIARKAKGSTGQVLLQLLEMRLDNILFRLGMALTVPGARQLVNHRHILINNSMVDIPSYNCKPKDVITIKDRPKSQSIITKNLNSFQKSKVPNHLSFDLMQVKGLVNQMIDREWILLKINELLVVEYYSRQV.

The 65-residue stretch at 90 to 154 folds into the S4 RNA-binding domain; that stretch reads MRLDNILFRL…SQSIITKNLN (65 aa).

The protein belongs to the universal ribosomal protein uS4 family. Part of the 30S ribosomal subunit. Contacts protein S5. The interaction surface between S4 and S5 is involved in control of translational fidelity.

Its subcellular location is the plastid. It localises to the chloroplast. In terms of biological role, one of the primary rRNA binding proteins, it binds directly to 16S rRNA where it nucleates assembly of the body of the 30S subunit. Its function is as follows. With S5 and S12 plays an important role in translational accuracy. This Monoclea forsteri (Liverwort) protein is Small ribosomal subunit protein uS4c (rps4).